A 453-amino-acid chain; its full sequence is Bifunctional protein GlmU (453 aa).

A pyrophosphorylase region spans residues 1–226 (MKFSTVILAA…SIEVEGVNDR (226 aa)). UDP-N-acetyl-alpha-D-glucosamine is bound by residues 8 to 11 (LAAG), lysine 22, glutamine 73, 78 to 79 (GT), 100 to 102 (YGD), glycine 137, glutamate 151, asparagine 166, and asparagine 224. Position 102 (aspartate 102) interacts with Mg(2+). Asparagine 224 provides a ligand contact to Mg(2+). The linker stretch occupies residues 227-247 (IQLARLERAFQARQAKKLLEQ). An N-acetyltransferase region spans residues 248 to 453 (GVMLRDPARF…AGWQRPAKKK (206 aa)). Residues arginine 330 and lysine 348 each contribute to the UDP-N-acetyl-alpha-D-glucosamine site. Histidine 360 serves as the catalytic Proton acceptor. 2 residues coordinate UDP-N-acetyl-alpha-D-glucosamine: tyrosine 363 and asparagine 374. Residues alanine 377, 383 to 384 (NY), serine 402, alanine 420, and arginine 437 each bind acetyl-CoA.

It in the N-terminal section; belongs to the N-acetylglucosamine-1-phosphate uridyltransferase family. The protein in the C-terminal section; belongs to the transferase hexapeptide repeat family. In terms of assembly, homotrimer. It depends on Mg(2+) as a cofactor.

The protein resides in the cytoplasm. The catalysed reaction is alpha-D-glucosamine 1-phosphate + acetyl-CoA = N-acetyl-alpha-D-glucosamine 1-phosphate + CoA + H(+). It carries out the reaction N-acetyl-alpha-D-glucosamine 1-phosphate + UTP + H(+) = UDP-N-acetyl-alpha-D-glucosamine + diphosphate. Its pathway is nucleotide-sugar biosynthesis; UDP-N-acetyl-alpha-D-glucosamine biosynthesis; N-acetyl-alpha-D-glucosamine 1-phosphate from alpha-D-glucosamine 6-phosphate (route II): step 2/2. The protein operates within nucleotide-sugar biosynthesis; UDP-N-acetyl-alpha-D-glucosamine biosynthesis; UDP-N-acetyl-alpha-D-glucosamine from N-acetyl-alpha-D-glucosamine 1-phosphate: step 1/1. It participates in bacterial outer membrane biogenesis; LPS lipid A biosynthesis. Catalyzes the last two sequential reactions in the de novo biosynthetic pathway for UDP-N-acetylglucosamine (UDP-GlcNAc). The C-terminal domain catalyzes the transfer of acetyl group from acetyl coenzyme A to glucosamine-1-phosphate (GlcN-1-P) to produce N-acetylglucosamine-1-phosphate (GlcNAc-1-P), which is converted into UDP-GlcNAc by the transfer of uridine 5-monophosphate (from uridine 5-triphosphate), a reaction catalyzed by the N-terminal domain. The protein is Bifunctional protein GlmU of Vibrio cholerae serotype O1 (strain M66-2).